A 171-amino-acid polypeptide reads, in one-letter code: UPF0763 protein KHP_0657 (171 aa).

The protein belongs to the UPF0763 family.

This chain is UPF0763 protein KHP_0657, found in Helicobacter pylori (strain 51).